Reading from the N-terminus, the 164-residue chain is Hydrogenase 2 maturation protease (164 aa).

Ni(2+) contacts are provided by glutamate 16, aspartate 62, and histidine 93.

This sequence belongs to the peptidase A31 family. Requires Ni(2+) as cofactor.

Functionally, protease involved in the C-terminal processing of HybC, the large subunit of hydrogenase 2. Specifically cleaves off a 15 amino acid peptide from the C-terminus of the precursor of HybC. This chain is Hydrogenase 2 maturation protease (hybD), found in Escherichia coli (strain K12).